Reading from the N-terminus, the 372-residue chain is Queuine tRNA-ribosyltransferase (372 aa).

D90 (proton acceptor) is an active-site residue. Substrate is bound by residues 90–94, D144, Q193, and G220; that span reads DSGGF. The RNA binding stretch occupies residues 251-257; sequence GVGTPED. D270 functions as the Nucleophile in the catalytic mechanism. The RNA binding; important for wobble base 34 recognition stretch occupies residues 275–279; the sequence is TRNAR. Positions 308, 310, 313, and 339 each coordinate Zn(2+).

Belongs to the queuine tRNA-ribosyltransferase family. In terms of assembly, homodimer. Within each dimer, one monomer is responsible for RNA recognition and catalysis, while the other monomer binds to the replacement base PreQ1. Zn(2+) serves as cofactor.

It catalyses the reaction 7-aminomethyl-7-carbaguanine + guanosine(34) in tRNA = 7-aminomethyl-7-carbaguanosine(34) in tRNA + guanine. Its pathway is tRNA modification; tRNA-queuosine biosynthesis. Its function is as follows. Catalyzes the base-exchange of a guanine (G) residue with the queuine precursor 7-aminomethyl-7-deazaguanine (PreQ1) at position 34 (anticodon wobble position) in tRNAs with GU(N) anticodons (tRNA-Asp, -Asn, -His and -Tyr). Catalysis occurs through a double-displacement mechanism. The nucleophile active site attacks the C1' of nucleotide 34 to detach the guanine base from the RNA, forming a covalent enzyme-RNA intermediate. The proton acceptor active site deprotonates the incoming PreQ1, allowing a nucleophilic attack on the C1' of the ribose to form the product. After dissociation, two additional enzymatic reactions on the tRNA convert PreQ1 to queuine (Q), resulting in the hypermodified nucleoside queuosine (7-(((4,5-cis-dihydroxy-2-cyclopenten-1-yl)amino)methyl)-7-deazaguanosine). The sequence is that of Queuine tRNA-ribosyltransferase from Campylobacter hominis (strain ATCC BAA-381 / DSM 21671 / CCUG 45161 / LMG 19568 / NCTC 13146 / CH001A).